A 1254-amino-acid chain; its full sequence is MLQRPPHRESFNDKEEIIDLPNLIEIQIKSYNQFLQADKFPDERENIGLQEVFTEIFPIKSYDEKTILEFLSYNLGVPKYNPEECIRRGITYNVTLKVKFRLTDETGIKEEEVYMGTIPVMTDKGTFIVNGAERVVVSQLHRSPGICFEQERHSRGNVIYSFRIIPYRGSWLEGAFDTNDLIHIYIDRKKRRRKILATTFIRALGYSSNSDIIEEFFTTRKYKIKNEKEFAKLVGKILAQDVVDEESGLVFGKASEKLTTAMLKRIVDAGIDVIRIAEDADETSPVIKMLAKDPTDSYESALKDFYRKIRPGEPATLSNARSAIMRLFFDPKRYNLGRVGRYKLNSKLGCEINDEKLQTVTLDKEDVIGALKYLIMLKSGSEEASIDDIDHLGNRRVRSVGELIQNQCRIGLARMEKIIRERMNLFDFSSDTLTPGKIVSAKGLSGVLKDFFGRSQLSQFMDQTNPIAELTHKRRLSSLGPGGLNRDRAGFEVRDVHTSHYGRICPIETPEGPNIGLISSLSSFAKINEFGFIETPYRIVREGVVTDEIEYMTADQEEQCVIAQASAPLDEYHMFAEPICWARYKGEQFETDTKNVTHMDVSPKQLVSIVTGLIPFLEHDDANRALMGSNMQRQGVPLLKPTAPIVGTGLEARAARDSGAVLIAHEDGVVDYVDGLKIVISPDDNRLEKRTYLLKKFIRSNAGTCINQRPLCHVGDKIKAGDVIADGPATDKGEVALGRNVLVAFMPWFGYNYEDAIIISEKLLREDYYTSLYIEEFELTARDTKLGKEEITRDIPNVSEETLRNLNDDGIIRIGAEVKPGDTLVGKITPKSETELAPEERLLRAIFGDKASDVKDASLIAPPGTEGVVMDVKVFSRRDRLSKTDDELVEEASKLKDIQREYKSNQAQLRTEKHERVGALLLNETAPGNIVHRRTAEIIVDEGDLITQDLIEALEKESVEDLLMPENDIYTTLRQILHDYEIALQTVETQYKTQLEFMRKGDTDLDPGVIRQVKVYVASKRKLQVGDKMAGRHGNKGVVSKIVPEADMPFLSTGQTIEIILNPLGVPSRMNMGQLFETHLGIAAKHTGITVKSPVFEGFPEEKIWEMMKKAGLPEDGKFFLYDGCSGERFDNSVVVGYIYMLKLSHLVADKIHARAVGPYSLVTQQPLGGKAQMGGQRFGEMEVWAAEAYGAAHLLQEMLTVKSDDVAGRTRIYESIVKGENLLKSGTPESFNVLIKEMQGLGLNVYTEAVDDS.

This sequence belongs to the RNA polymerase beta chain family. As to quaternary structure, the RNAP catalytic core consists of 2 alpha, 1 beta, 1 beta' and 1 omega subunit. When a sigma factor is associated with the core the holoenzyme is formed, which can initiate transcription.

It catalyses the reaction RNA(n) + a ribonucleoside 5'-triphosphate = RNA(n+1) + diphosphate. Functionally, DNA-dependent RNA polymerase catalyzes the transcription of DNA into RNA using the four ribonucleoside triphosphates as substrates. This Protochlamydia amoebophila (strain UWE25) protein is DNA-directed RNA polymerase subunit beta.